The sequence spans 151 residues: Transcriptional repressor NrdR (151 aa).

A zinc finger lies at 3-34 (CPYCGYGESKVVDSRATDDKMAIRRRRECLKC). The ATP-cone domain maps to 49 to 139 (LLVIKKNMSR…VYRQFKDINT (91 aa)).

The protein belongs to the NrdR family. Zn(2+) is required as a cofactor.

In terms of biological role, negatively regulates transcription of bacterial ribonucleotide reductase nrd genes and operons by binding to NrdR-boxes. This is Transcriptional repressor NrdR from Clostridium kluyveri (strain NBRC 12016).